We begin with the raw amino-acid sequence, 292 residues long: tRNA dimethylallyltransferase (292 aa).

10–17 (GPTASGKS) lines the ATP pocket. 12 to 17 (TASGKS) contacts substrate. 2 interaction with substrate tRNA regions span residues 35–38 (DSMQ) and 159–163 (QRIVR).

The protein belongs to the IPP transferase family. As to quaternary structure, monomer. It depends on Mg(2+) as a cofactor.

The catalysed reaction is adenosine(37) in tRNA + dimethylallyl diphosphate = N(6)-dimethylallyladenosine(37) in tRNA + diphosphate. Functionally, catalyzes the transfer of a dimethylallyl group onto the adenine at position 37 in tRNAs that read codons beginning with uridine, leading to the formation of N6-(dimethylallyl)adenosine (i(6)A). The polypeptide is tRNA dimethylallyltransferase (Chelativorans sp. (strain BNC1)).